A 318-amino-acid chain; its full sequence is Protein LplB (318 aa).

6 consecutive transmembrane segments (helical) span residues 35–55 (LIPG…GVLI), 94–114 (LMLA…LALL), 130–150 (FIYV…FVFF), 182–202 (IVMQ…LAAL), 236–256 (IIVL…EQVY), and 289–309 (AVGL…NYIA). In terms of domain architecture, ABC transmembrane type-1 spans 90–305 (LRNTLMLASL…VVGIILIFGA (216 aa)).

This sequence belongs to the binding-protein-dependent transport system permease family. MalFG subfamily.

The protein resides in the cell membrane. The protein is Protein LplB (lplB) of Bacillus subtilis (strain 168).